Consider the following 310-residue polypeptide: Cell division protein FtsQ (310 aa).

The tract at residues 1–57 is disordered; the sequence is MSEPENTAEDKDAEAAISADAVESETTADGGENPAEGESAEGPRMRARRERMERREA. At 1-95 the chain is on the cytoplasmic side; it reads MSEPENTAED…AGRGKVQGLQ (95 aa). The chain crosses the membrane as a helical span at residues 96-116; that stretch reads TLLLVVLLALIAVGLGSILYF. Topologically, residues 117 to 310 are extracellular; sequence TPLMSVRQTV…VSSPDLPTVK (194 aa). Residues 120–188 enclose the POTRA domain; the sequence is MSVRQTVVTG…STLRVTIVER (69 aa).

The protein belongs to the FtsQ/DivIB family. FtsQ subfamily.

It localises to the cell membrane. Functionally, essential cell division protein. In Mycobacteroides abscessus (strain ATCC 19977 / DSM 44196 / CCUG 20993 / CIP 104536 / JCM 13569 / NCTC 13031 / TMC 1543 / L948) (Mycobacterium abscessus), this protein is Cell division protein FtsQ.